Consider the following 401-residue polypeptide: Leucine aminopeptidase 1 (401 aa).

The signal sequence occupies residues 1–18 (MKVAKASLLTILAHSVSA). Positions 19–87 (RFLAEDEINR…GATRLRTKTK (69 aa)) are excised as a propeptide. Asn-179 is a glycosylation site (N-linked (GlcNAc...) asparagine). 4 residues coordinate Zn(2+): His-187, Asp-206, Glu-245, and Asp-272. Cys-321 and Cys-325 are oxidised to a cystine. His-354 is a Zn(2+) binding site.

Belongs to the peptidase M28 family. M28E subfamily. As to quaternary structure, monomer. Zn(2+) serves as cofactor.

The protein resides in the secreted. Its function is as follows. Extracellular aminopeptidase that allows assimilation of proteinaceous substrates. The chain is Leucine aminopeptidase 1 (LAP1) from Colletotrichum graminicola (strain M1.001 / M2 / FGSC 10212) (Maize anthracnose fungus).